A 255-amino-acid polypeptide reads, in one-letter code: Acetylglutamate kinase (255 aa).

Substrate is bound by residues 40 to 41, R62, and N153; that span reads GG.

This sequence belongs to the acetylglutamate kinase family. ArgB subfamily.

It is found in the cytoplasm. The catalysed reaction is N-acetyl-L-glutamate + ATP = N-acetyl-L-glutamyl 5-phosphate + ADP. The protein operates within amino-acid biosynthesis; L-arginine biosynthesis; N(2)-acetyl-L-ornithine from L-glutamate: step 2/4. Its function is as follows. Catalyzes the ATP-dependent phosphorylation of N-acetyl-L-glutamate. The sequence is that of Acetylglutamate kinase from Bacillus cereus (strain AH820).